Consider the following 521-residue polypeptide: Sodium/hydrogen exchanger 5 (521 aa).

Residues 1-23 (MEEVMISPVEHDPQGQVKQQQAA) lie on the Cytoplasmic side of the membrane. The helical transmembrane segment at 24–44 (GVGILLQIMMLVLSFVLGHVL) threads the bilayer. The Lumenal segment spans residues 45-48 (RRHR). Residues 49-69 (FHYLPEASGSLLIGLIVGILA) traverse the membrane as a helical segment. The Cytoplasmic portion of the chain corresponds to 70 to 86 (NISDTETSIRTWFNFHE). An intramembrane region (helical) is located at residues 87–107 (EFFFLFLLPPIIFQSGFSLQP). The Cytoplasmic portion of the chain corresponds to 108-115 (KPFFSNFG). A helical transmembrane segment spans residues 116–136 (AIVTFAIIGTFVASVVTGGLV). The Lumenal segment spans residues 137–141 (YLGGS). Intramembrane regions (helical) lie at residues 142–162 (MYLM…LISA) and 166–186 (VTVL…ALVF). Residues 187–222 (GESVLNDAMAISLYRTMSLVNRQSSSGEHFFMVVIR) lie on the Lumenal side of the membrane. A helical transmembrane segment spans residues 223 to 243 (FFETFAGSMSAGVGVGFTSAL). Residues 244–271 (LFKYAGLDTENLQNLECCLFVLFPYFSY) lie on the Cytoplasmic side of the membrane. Residues 272-292 (MLAEGVGLSGIVSILFTGIVM) traverse the membrane as a helical segment. Over 293-310 (KRYTFSNLSEASQSFVSS) the chain is Lumenal. N-linked (GlcNAc...) asparagine glycosylation occurs at asparagine 299. A helical transmembrane segment spans residues 311-331 (FFHLISSLAETFTFIYMGFDI). The Cytoplasmic portion of the chain corresponds to 332 to 340 (AMEQHSWSH). Residues 341–361 (VGFILFSILFIGVARAVNVFG) traverse the membrane as a helical segment. Topologically, residues 362 to 382 (CAYLVNLFRQENQKIPMKHQK) are lumenal. The helical transmembrane segment at 383–402 (ALWYSGLRGAMAFALALQSL) threads the bilayer. At 403 to 411 (HDLPEGHGQ) the chain is on the cytoplasmic side. Residues 412 to 432 (IIFTATTTIVVVTVLLIGGST) traverse the membrane as a helical segment. The Lumenal segment spans residues 433–521 (GKMLEALEVV…NSGDGDGDGE (89 aa)). The interval 453 to 480 (GFEESDHQYVPPPFSIGASSDEDTSSSG) is disordered. A compositionally biased stretch (low complexity) spans 467-480 (SIGASSDEDTSSSG).

This sequence belongs to the monovalent cation:proton antiporter 1 (CPA1) transporter (TC 2.A.36) family. In terms of tissue distribution, expressed in roots, leaves, stems, flowers and siliques. Detected at low levels in roots and shoots.

The protein localises to the endosome membrane. Its subcellular location is the golgi apparatus. The protein resides in the trans-Golgi network membrane. It localises to the golgi stack membrane. The catalysed reaction is Na(+)(in) + H(+)(out) = Na(+)(out) + H(+)(in). It catalyses the reaction K(+)(in) + H(+)(out) = K(+)(out) + H(+)(in). In terms of biological role, involved in trafficking to the vacuole. Required for cell proliferation and cell expansion, but not for cell differentiation. Acts in low affinity electroneutral exchange of protons for cations such as Na(+) or K(+) across membranes. May also exchange Li(+) and Cs(+) with a lower affinity. This chain is Sodium/hydrogen exchanger 5 (NHX5), found in Arabidopsis thaliana (Mouse-ear cress).